The chain runs to 370 residues: Histidinol-phosphate aminotransferase (370 aa).

N6-(pyridoxal phosphate)lysine is present on Lys231.

Belongs to the class-II pyridoxal-phosphate-dependent aminotransferase family. Histidinol-phosphate aminotransferase subfamily. In terms of assembly, homodimer. Pyridoxal 5'-phosphate is required as a cofactor.

The catalysed reaction is L-histidinol phosphate + 2-oxoglutarate = 3-(imidazol-4-yl)-2-oxopropyl phosphate + L-glutamate. The protein operates within amino-acid biosynthesis; L-histidine biosynthesis; L-histidine from 5-phospho-alpha-D-ribose 1-diphosphate: step 7/9. This is Histidinol-phosphate aminotransferase from Paracidovorax citrulli (strain AAC00-1) (Acidovorax citrulli).